The sequence spans 56 residues: UPF0434 protein CBUD_1597.1 (56 aa).

It belongs to the UPF0434 family.

This Coxiella burnetii (strain Dugway 5J108-111) protein is UPF0434 protein CBUD_1597.1.